Reading from the N-terminus, the 552-residue chain is Chaperonin GroEL 1 (552 aa).

ATP contacts are provided by residues 30-33 (TLGP), K51, 87-91 (DGTTT), G415, 479-481 (NAA), and D495.

It belongs to the chaperonin (HSP60) family. Forms a cylinder of 14 subunits composed of two heptameric rings stacked back-to-back. Interacts with the co-chaperonin GroES.

It localises to the cytoplasm. The enzyme catalyses ATP + H2O + a folded polypeptide = ADP + phosphate + an unfolded polypeptide.. Its function is as follows. Together with its co-chaperonin GroES, plays an essential role in assisting protein folding. The GroEL-GroES system forms a nano-cage that allows encapsulation of the non-native substrate proteins and provides a physical environment optimized to promote and accelerate protein folding. This chain is Chaperonin GroEL 1, found in Albidiferax ferrireducens (strain ATCC BAA-621 / DSM 15236 / T118) (Rhodoferax ferrireducens).